The sequence spans 407 residues: MAYDLLLERFLRYAKINTRSDENATRTPTTQSQVDFALNILKPELEELGLSNIHYLESNGYLVATLPANDDRLTRKIGFISHMDTADFNAEGVSPQVIESYDGGIIPLGTSGYNLDPADFPNLQNYIGQTLITTDGTTLLGADDKSGIAEIMTALAHLKANPEIKHCEIRVGFGPDEEIGIGADKFDVDDFDVDFAYTVDGGPLGELQYETFSAAGAELIFHGRNVHPGTAKGQMVNALQLAIDFHNQLPAEDRPELTDGYQGFNHLQTMTGTVEEANSSYIIRDFETESFENRKATFQEIADKMNQAYGQTRVDLVIKDQYYNMRQVIEKDMMPVELAKEVMEDLGIVPVIEPIRGGTDGSKISFKGIPTPNIFAGGENMHGRYEFVSLQTMEKAVDVILGIISKP.

His82 is a binding site for Zn(2+). Asp84 is an active-site residue. Asp143 contacts Zn(2+). Catalysis depends on Glu177, which acts as the Proton acceptor. Zn(2+) contacts are provided by Glu178, Asp200, and His382.

The protein belongs to the peptidase M20B family. The cofactor is Zn(2+).

It is found in the cytoplasm. The catalysed reaction is Release of the N-terminal residue from a tripeptide.. Its function is as follows. Cleaves the N-terminal amino acid of tripeptides. The polypeptide is Peptidase T (Streptococcus thermophilus (strain ATCC BAA-491 / LMD-9)).